The sequence spans 468 residues: Squamosa promoter-binding-like protein 5 (468 aa).

Residues Pro204–Pro281 form an SBP-type zinc finger. Residues Cys207, Cys212, Cys229, His232, Cys248, Cys251, His255, and Cys267 each coordinate Zn(2+). A Bipartite nuclear localization signal motif is present at residues Lys264 to Lys280. 3 disordered regions span residues Arg270–Ile305, Thr354–Leu374, and His405–Asn458. A compositionally biased stretch (acidic residues) spans Gln363–Gly372. Low complexity predominate over residues Asn438–Asn458.

Ubiquitous.

The protein resides in the nucleus. Functionally, trans-acting factor that binds specifically to the consensus nucleotide sequence 5'-TNCGTACAA-3'. This is Squamosa promoter-binding-like protein 5 (SPL5) from Oryza sativa subsp. japonica (Rice).